Here is a 91-residue protein sequence, read N- to C-terminus: Elongation factor 1-beta (91 aa).

The protein belongs to the EF-1-beta/EF-1-delta family.

Promotes the exchange of GDP for GTP in EF-1-alpha/GDP, thus allowing the regeneration of EF-1-alpha/GTP that could then be used to form the ternary complex EF-1-alpha/GTP/AAtRNA. This Thermococcus kodakarensis (strain ATCC BAA-918 / JCM 12380 / KOD1) (Pyrococcus kodakaraensis (strain KOD1)) protein is Elongation factor 1-beta.